The primary structure comprises 333 residues: Anthranilate phosphoribosyltransferase (333 aa).

5-phospho-alpha-D-ribose 1-diphosphate contacts are provided by residues G80, G83 to D84, T88, N90 to T93, K108 to G116, and S120. G80 lines the anthranilate pocket. Position 92 (S92) interacts with Mg(2+). An anthranilate-binding site is contributed by N111. R166 provides a ligand contact to anthranilate. The Mg(2+) site is built by D224 and E225.

The protein belongs to the anthranilate phosphoribosyltransferase family. Homodimer. It depends on Mg(2+) as a cofactor.

The catalysed reaction is N-(5-phospho-beta-D-ribosyl)anthranilate + diphosphate = 5-phospho-alpha-D-ribose 1-diphosphate + anthranilate. Its pathway is amino-acid biosynthesis; L-tryptophan biosynthesis; L-tryptophan from chorismate: step 2/5. In terms of biological role, catalyzes the transfer of the phosphoribosyl group of 5-phosphorylribose-1-pyrophosphate (PRPP) to anthranilate to yield N-(5'-phosphoribosyl)-anthranilate (PRA). This is Anthranilate phosphoribosyltransferase from Pyrobaculum aerophilum (strain ATCC 51768 / DSM 7523 / JCM 9630 / CIP 104966 / NBRC 100827 / IM2).